A 292-amino-acid chain; its full sequence is uncharacterized protein (292 aa).

This sequence belongs to the glycosyltransferase 2 family. WaaE/KdtX subfamily.

This is an uncharacterized protein from Rickettsia typhi (strain ATCC VR-144 / Wilmington).